We begin with the raw amino-acid sequence, 1150 residues long: MTAVRRSTRIRTKSQVIEEDYDDEQNTSAQHVESDKITAKTQHEEEEEQDTGESEESSSEDDYEDQDDDDYVDTATAKRKSRKRKPKSASNTSSKRQKKKPTSAQKSAVSHAPAYHRSKKDQDQYLEIAKDFQPTELFDILSTSEDVSIEELLREWLETYSENRDKFLQEFINLLLNCCGSVARVEDHDVHSNESSNETIGEIQLLFQRQKLHEFYLLISKENKKRKNFKMGPLYQNFAEFMTKLLEVANDLQLLYVESDEDDTQIVTGNLVLDLLTWLSSFSVCKIRCFRYISTLTLYLFQDYLTQQAVNLEKNYLAKLSKQLSLEEKKKRPNNKTLEKLESTIAETQGSKVVIDSIIDNIVKLCFVHRYKDVSDLIRSESMLHLSIWIKNYPEYFLKVTFLKYFGWLLSDNSVSVRLQVTKILPHLIIQNHNSKSTDNSAIRQVFERFKTKILEVAIRDVNLDVRIHSIQVLTEASSLGYLDDSEILIISSLMFDEEFDPFKTSSFNKRSKFLSTVAKFLARVIKEKFDEFIKTHEDLPKEVDGLEVGPVVQVGIFIKILNDSLIYHLKDCAEVDSRTKIRMLTQAAEFLSPYISTHLKTICNLLISDTESNELIQKLQNSANNNSDDEDVDDEELDITPLFPIDRNSTILYLNVFHGLCAGANNPKIQTKDSVKEIVLPLFYDLLNAASIESADILCPLLESFITFSLDDWISIGYETELKKITDKTIKAFMDSTIGNSKVDMKYDIFAKFIHHIHHFEKKELQEKFLNQIATLKIHLKKFLQEKMDPNNSRDDYKDLTCSLYELYINKLTILGRDYPIEVDEELLQLFLNNFVSRIPIMFQDFDDSTAQEINFKMLVLLATWNLEKWREIIEKVRDYENSISKDLRSVWKPIAAIIGRLNTLVISLAATNETFENINSLFYLKWSACTSLMDIIVAIKIFELKLPADATTWRYSMSEQFPFYLHDNASKVLLKIFLYLESLFAKQVDVQLERVADEDANLNDLPETGFFENIETEFLLFTVKLKGLMKLNILDERFASRVALNKEKLGPLFKKIVDDTIMENPEPNKKNIQKAKSNQTQREKAPLQPNSERETDHANTENNDPDIPMTIDLEPIEESSQNNSELAPIEEHPTVVDAIDNSDEITQD.

Residues 1-12 are compositionally biased toward basic residues; it reads MTAVRRSTRIRT. Residues 1–122 form a disordered region; the sequence is MTAVRRSTRI…PAYHRSKKDQ (122 aa). Phosphoserine is present on S28. The segment covering 32–43 has biased composition (basic and acidic residues); sequence VESDKITAKTQH. The span at 44-72 shows a compositional bias: acidic residues; sequence EEEEEQDTGESEESSSEDDYEDQDDDDYV. Over residues 77–87 the composition is skewed to basic residues; the sequence is AKRKSRKRKPK. Positions 305–349 form a coiled coil; the sequence is LTQQAVNLEKNYLAKLSKQLSLEEKKKRPNNKTLEKLESTIAETQ. The 91-residue stretch at 367–457 folds into the SCD domain; that stretch reads FVHRYKDVSD…ERFKTKILEV (91 aa). S628 is subject to Phosphoserine. The disordered stretch occupies residues 1065 to 1150; it reads ENPEPNKKNI…IDNSDEITQD (86 aa). Residues 1083-1101 are compositionally biased toward basic and acidic residues; that stretch reads QREKAPLQPNSERETDHAN.

This sequence belongs to the SCC3 family. In terms of assembly, interacts directly with MCD1 in cohesin complex. Cohesin complexes are composed of the SMC1 and SMC3 heterodimer attached via their hinge domain, MCD1 which link them, and IRR1/SCC3, which interacts with MCD1. The cohesin complex also interacts with SCC2, which is required for its association with chromosomes. Interacts with LIN1. Post-translationally, acetylated by ECO1.

The protein resides in the nucleus. It localises to the chromosome. It is found in the centromere. Functionally, component of cohesin complex, a complex required for the cohesion of sister chromatids after DNA replication. The cohesin complex apparently forms a large proteinaceous ring within which sister chromatids can be trapped. At anaphase, the MCD1/SCC1 subunit of the complex is cleaved and dissociates from chromatin, allowing sister chromatids to segregate. The cohesin complex may also play a role in spindle pole assembly during mitosis. This Saccharomyces cerevisiae (strain ATCC 204508 / S288c) (Baker's yeast) protein is Cohesin subunit SCC3 (IRR1).